The sequence spans 287 residues: 4-diphosphocytidyl-2-C-methyl-D-erythritol kinase (287 aa).

The active site involves K12. 94-104 (PAQAGMGGGSS) lines the ATP pocket. D136 is an active-site residue.

The protein belongs to the GHMP kinase family. IspE subfamily.

The catalysed reaction is 4-CDP-2-C-methyl-D-erythritol + ATP = 4-CDP-2-C-methyl-D-erythritol 2-phosphate + ADP + H(+). Its pathway is isoprenoid biosynthesis; isopentenyl diphosphate biosynthesis via DXP pathway; isopentenyl diphosphate from 1-deoxy-D-xylulose 5-phosphate: step 3/6. Catalyzes the phosphorylation of the position 2 hydroxy group of 4-diphosphocytidyl-2C-methyl-D-erythritol. The protein is 4-diphosphocytidyl-2-C-methyl-D-erythritol kinase of Albidiferax ferrireducens (strain ATCC BAA-621 / DSM 15236 / T118) (Rhodoferax ferrireducens).